A 343-amino-acid polypeptide reads, in one-letter code: Phenylalanine--tRNA ligase alpha subunit (343 aa).

Mg(2+) is bound at residue Glu-268.

The protein belongs to the class-II aminoacyl-tRNA synthetase family. Phe-tRNA synthetase alpha subunit type 1 subfamily. As to quaternary structure, tetramer of two alpha and two beta subunits. Mg(2+) is required as a cofactor.

It is found in the cytoplasm. The catalysed reaction is tRNA(Phe) + L-phenylalanine + ATP = L-phenylalanyl-tRNA(Phe) + AMP + diphosphate + H(+). This Cupriavidus necator (strain ATCC 17699 / DSM 428 / KCTC 22496 / NCIMB 10442 / H16 / Stanier 337) (Ralstonia eutropha) protein is Phenylalanine--tRNA ligase alpha subunit.